A 453-amino-acid polypeptide reads, in one-letter code: Argininosuccinate lyase (453 aa).

It belongs to the lyase 1 family. Argininosuccinate lyase subfamily.

The protein localises to the cytoplasm. The enzyme catalyses 2-(N(omega)-L-arginino)succinate = fumarate + L-arginine. Its pathway is amino-acid biosynthesis; L-arginine biosynthesis; L-arginine from L-ornithine and carbamoyl phosphate: step 3/3. This is Argininosuccinate lyase from Shewanella loihica (strain ATCC BAA-1088 / PV-4).